A 159-amino-acid polypeptide reads, in one-letter code: Afifavidin (159 aa).

The N-terminal stretch at 1 to 23 is a signal peptide; the sequence is MRRLASLAVALPLLAVVASPALA. One can recognise an Avidin-like domain in the interval 36–151; it reads GVPAVSSSWV…GSDTFTLVNK (116 aa). N46, S50, Y66, N68, and G74 together coordinate biotin. Residues C75 and C104 are joined by a disulfide bond. The biotin site is built by S106, T108, and D144.

Belongs to the avidin/streptavidin family. As to quaternary structure, exhibits a dynamic oligomeric assembly: the apo form self-assembles mostly into toroid-shaped homooctamers, with a small fraction of homodimers, yet upon biotin binding the intact afifavidin consists solely of the dimer.

It localises to the secreted. Its function is as follows. The exact role played by afifavidin is still obscure. Forms a strong non-covalent complex with biotin and 2-iminobiotin. The sequence is that of Afifavidin from Afifella pfennigii (Rhodobium pfennigii).